Reading from the N-terminus, the 101-residue chain is Integration host factor subunit alpha (101 aa).

The protein belongs to the bacterial histone-like protein family. As to quaternary structure, heterodimer of an alpha and a beta chain.

Its function is as follows. This protein is one of the two subunits of integration host factor, a specific DNA-binding protein that functions in genetic recombination as well as in transcriptional and translational control. This chain is Integration host factor subunit alpha, found in Maricaulis maris (strain MCS10) (Caulobacter maris).